Consider the following 247-residue polypeptide: Acetoacetate decarboxylase 1 (247 aa).

Lysine 116 (schiff-base intermediate with acetoacetate) is an active-site residue.

It belongs to the ADC family.

The catalysed reaction is acetoacetate + H(+) = acetone + CO2. Functionally, catalyzes the conversion of acetoacetate to acetone and carbon dioxide. The chain is Acetoacetate decarboxylase 1 from Mesorhizobium japonicum (strain LMG 29417 / CECT 9101 / MAFF 303099) (Mesorhizobium loti (strain MAFF 303099)).